Consider the following 610-residue polypeptide: Modifier of mdg4 (610 aa).

Residues 1–160 are self-association; the sequence is MADDEQFSLC…QQPRASARYK (160 aa). Residues 1–308 are interaction with Chi; sequence MADDEQFSLC…EEAEYIDLPM (308 aa). The 67-residue stretch at 32–98 folds into the BTB domain; sequence VDVSLAAEGQ…MYCGEVNVKQ (67 aa). Disordered regions lie at residues 115–156, 219–259, 311–339, and 386–432; these read GLTD…PRAS, VSTN…DSTT, PTKSEPDYSEDHGDAAGDAEGTYVEDDTY, and ESSF…PKPK. The span at 122-135 shows a compositional bias: pro residues; that stretch reads APQPPQESSPPPAA. A compositionally biased stretch (low complexity) spans 136-156; sequence PHVQQQQIPAQRVQRQQPRAS. Residues 222-238 show a composition bias toward polar residues; that stretch reads NKRSAQRSSLTPASSSA. The residue at position 230 (Ser-230) is a Phosphoserine. Residues 312 to 325 are compositionally biased toward basic and acidic residues; sequence TKSEPDYSEDHGDA. Over residues 386–400 the composition is skewed to polar residues; the sequence is ESSFVDTSGDQGNTE. The span at 401 to 410 shows a compositional bias: low complexity; that stretch reads AQAATSASAT. A compositionally biased stretch (basic and acidic residues) spans 422–432; sequence TKVEDQTPKPK. The segment at 452-512 adopts an FLYWCH-type zinc-finger fold; the sequence is YASTTKGGVK…VFPYEGEHVH (61 aa). Residues 551-610 form an interaction with su(Hw) region; it reads LEEADDKEDEDFEEFEIQEIDEIELDEPEKTPAKEEEVDPNDFREKIKRRLQKALQNKKK. Acidic residues predominate over residues 567 to 577; that stretch reads IQEIDEIELDE. The interval 567-595 is disordered; it reads IQEIDEIELDEPEKTPAKEEEVDPNDFRE. Residues 578–595 show a composition bias toward basic and acidic residues; the sequence is PEKTPAKEEEVDPNDFRE.

In terms of assembly, can self-associate. Interacts with Chi. Interacts with Top2. Isoform mod2.2: Component of the gypsy chromatin insulator complex, composed of Cp190, mod(mdg4) and su(Hw). The gypsy chromatin insulator complex interacts with Topors via mod(mdg4) and su(Hw). Isoform mod2.2 interacts with Trl/GAGA and interaction with this protein may bypass the repressive effects of the su(Hw) insulator.

It localises to the nucleus. Its subcellular location is the chromosome. Component of the gypsy chromatin insulator complex which is required for the function of the gypsy chromatin insulator and other endogenous chromatin insulators. Chromatin insulators are regulatory elements which establish independent domains of transcriptional activity within eukaryotic genomes. Insulators have two defining properties; they can block the communication between an enhancer and a promoter when placed between them and can also buffer transgenes from position effect variegation (PEV). Insulators are proposed to structure the chromatin fiber into independent domains of differing transcriptional potential by promoting the formation of distinct chromatin loops. This chromatin looping may involve the formation of insulator bodies, where homotypic interactions between individual subunits of the insulator complex could promote the clustering of widely spaced insulators at the nuclear periphery. Within the gypsy insulator complex, this protein may control the nature of the repressive effect of su(Hw): in the absence of mod(mdg4) protein, su(Hw) exerts a bidirectional silencing effect, whereas in the presence of mod(mdg4), the silencing effect is unidirectional. Isoform H is specifically required to maintain the pairing of achiasmate homologs in male meiosis I which is mediated by the rDNA repeats on the achiasmate X-Y bivalents. Isoform H also plays a role in apoptotic regulatory pathways. This chain is Modifier of mdg4, found in Drosophila melanogaster (Fruit fly).